The following is a 544-amino-acid chain: Regulator of G-protein signaling 14 (544 aa).

A disordered region spans residues V19–Q59. S20, S42, S45, S143, S199, S203, S218, and S286 each carry phosphoserine. Over residues E23 to E58 the composition is skewed to polar residues. Positions S67–L184 constitute an RGS domain. Residues R191–P220 form a disordered region. The segment at R297–V424 is necessary for interaction with RABGEF1. 2 RBD domains span residues K300 to R371 and T373 to L443. The tract at residues R449–Q493 is disordered. S481 carries the phosphoserine modification. A GoLoco domain is found at I497–L519.

Interacts with GNAI1, GNAI2 and GNAI3. Interacts with GNAO1. Interacts (via RGS and GoLoco domains) with GNAI1; the interaction occurs in the centrosomes. Interaction with GNAI1 or GNAI3 (via active GTP- or inactive GDP-bound forms) prevents association of RGS14 with centrosomes or nuclear localization. Interacts with RABGEF1; the interactions is GTP-dependent. Interacts with RAP2A; the interactions is GTP-dependent and does not alter its function on G(i) alpha subunits either as GAP or as GDI. Associates with microtubules. Found in a complex with at least BRAF, HRAS, MAP2K1, MAPK3 and RGS14. Interacts with RIC8A (via C-terminus). Interacts (via RBD 1 domain) with HRAS (active GTP-bound form preferentially). Interacts (via RBD domains) with BRAF (via N-terminus); the interaction mediates the formation of a ternary complex with RAF1. Interacts (via RBD domains) with RAF1 (via N-terminus); the interaction mediates the formation of a ternary complex with BRAF. Interacts with KRAS (active GTP-bound form preferentially), MRAS (active GTP-bound form preferentially), NRAS (active GTP-bound form preferentially) and RRAS (active GTP-bound form preferentially). Post-translationally, phosphorylated by PKC. Phosphorylation is increased in presence of forskolin and may enhance the GDI activity on G(i) alpha subunit GNAI1. As to expression, expressed in neurons of the V2 secondary visual cortex area (at protein level). Expressed at high levels in the brain cortex, hippocampus, striatum, thalamus and substantia nigra, in the lung, and spleen. Low expression has been found in heart, liver, skeletal muscle and testis.

The protein localises to the nucleus. The protein resides in the PML body. Its subcellular location is the cytoplasm. It localises to the membrane. It is found in the cell membrane. The protein localises to the cytoskeleton. The protein resides in the microtubule organizing center. Its subcellular location is the centrosome. It localises to the spindle. It is found in the spindle pole. The protein localises to the cell projection. The protein resides in the dendrite. Its subcellular location is the dendritic spine. It localises to the postsynaptic density. Functionally, regulates G protein-coupled receptor signaling cascades. Inhibits signal transduction by increasing the GTPase activity of G protein alpha subunits, thereby driving them into their inactive GDP-bound form. Besides, modulates signal transduction via G protein alpha subunits by functioning as a GDP-dissociation inhibitor (GDI). Has GDI activity on G(i) alpha subunits GNAI1 and GNAI3, but not on GNAI2 and G(o)-alpha subunit GNAO1. Has GAP activity on GNAI0, GNAI2 and GNAI3. May act as a scaffold integrating G protein and Ras/Raf MAPkinase signaling pathways. Inhibits platelet-derived growth factor (PDGF)-stimulated ERK1/ERK2 phosphorylation; a process depending on its interaction with HRAS and that is reversed by G(i) alpha subunit GNAI1. Acts as a positive modulator of microtubule polymerisation and spindle organization through a G(i)-alpha-dependent mechanism. Plays a role in cell division; required for completion of the first mitotic division of the embryo. Involved in visual memory processing capacity; when overexpressed in the V2 secondary visual cortex area. Involved in hippocampal-based learning and memory; acts as a suppressor of synaptic plasticity in CA2 neurons. Required for the nerve growth factor (NGF)-mediated neurite outgrowth. Involved in stress resistance. In Rattus norvegicus (Rat), this protein is Regulator of G-protein signaling 14 (Rgs14).